Here is a 206-residue protein sequence, read N- to C-terminus: Peptidyl-tRNA hydrolase (206 aa).

Tyrosine 14 serves as a coordination point for tRNA. The Proton acceptor role is filled by histidine 19. 3 residues coordinate tRNA: tyrosine 64, asparagine 66, and asparagine 112.

Belongs to the PTH family. In terms of assembly, monomer.

It localises to the cytoplasm. The enzyme catalyses an N-acyl-L-alpha-aminoacyl-tRNA + H2O = an N-acyl-L-amino acid + a tRNA + H(+). Hydrolyzes ribosome-free peptidyl-tRNAs (with 1 or more amino acids incorporated), which drop off the ribosome during protein synthesis, or as a result of ribosome stalling. Its function is as follows. Catalyzes the release of premature peptidyl moieties from peptidyl-tRNA molecules trapped in stalled 50S ribosomal subunits, and thus maintains levels of free tRNAs and 50S ribosomes. In Rhodopseudomonas palustris (strain ATCC BAA-98 / CGA009), this protein is Peptidyl-tRNA hydrolase.